The primary structure comprises 990 residues: Type III restriction-modification enzyme StyLTI Res subunit (990 aa).

Residues 50-545 (NIDVKMETGT…GLRLPVDENG (496 aa)) form a helicase-like domain region. The 87-residue stretch at 884-970 (LLKYDYPQQV…RQNINVEFAE (87 aa)) folds into the VRR-NUC domain. Residues 913 to 937 (STTPDFVYRIERQDADSVYLLVETK) form an endonuclease domain region.

It belongs to the type III restriction-modification system Res protein family. As to quaternary structure, contains two different subunits: Res and Mod. It depends on Mg(2+) as a cofactor. S-adenosyl-L-methionine is required as a cofactor.

It catalyses the reaction Endonucleolytic cleavage of DNA to give specific double-stranded fragments with terminal 5'-phosphates.. Its function is as follows. A type III restriction enzyme that recognizes 2 inversely oriented double-stranded sequences 5'-CAGAG-3' and cleaves DNA 25-27 base pairs downstream. After binding to one recognition site undergoes random one-dimensional diffusion along DNA until it collides with a stationary enzyme bound to the second DNA site, which is when DNA cleavage occurs. DNA restriction requires both the Res and Mod subunits. In Salmonella typhimurium (strain LT2 / SGSC1412 / ATCC 700720), this protein is Type III restriction-modification enzyme StyLTI Res subunit.